The following is a 309-amino-acid chain: Partitioning defective protein 6 (309 aa).

The 83-residue stretch at 14-96 folds into the PB1 domain; it reads TLQVKSKFDS…PLLRLLIQRR (83 aa). The Pseudo-CRIB domain maps to 132 to 149; sequence ISNPEDFRQVSAIIDVDI. Residues 156–249 form the PDZ domain; the sequence is RVRLCKHGQE…NLIITVKPAN (94 aa). The segment covering 249-270 has biased composition (polar residues); that stretch reads NQRNTLSRGPSQQGTPNASEMS. The tract at residues 249–309 is disordered; that stretch reads NQRNTLSRGP…DANDSDSGED (61 aa).

Belongs to the PAR6 family. In terms of assembly, interacts with par-3, required for its peripheral localization, and with cdc-42, required for the activation of a par-3/par-6/pkc-3 complex. As to expression, colocalized with par-3 at all stages in early embryos, at the anterior cortex of the embryo. Patchy expression observed at the periphery after completion of meiosis I and in meiosis II, which on completion of metaphase II, is restricted to the anterior 85% of embryo length; this decreases to 55% in embryos between prophase and telophase of the first mitosis. During the first cleavage, expression is detected in the advancing furrow. Along with pkc-3, is unable to associate with the apical cortex of cells that lack par-3. Transiently coexpressed and colocalized with par-3 and pkc-3, asymmetrically in the developing somatic gonad, including the spermathecal precursor cells of L4 larvae.

It localises to the cytoplasm. Its subcellular location is the cell membrane. The protein localises to the cell junction. The protein resides in the tight junction. Its function is as follows. Necessary for apicobasal and anterior-posterior asymmetries associated with cell adhesion and gastrulation during the first few cell cycles of embryogenesis. Required for localizing/ maintaining par-3 at the cell periphery. Regulates mes-1 expression and/or localization pattern during early embryogenesis. Acts together with par-3 and pkc-3 in maintaining epithelial cell polarity in the distal spermatheca. Plays a role in endosome and Golgi body positioning. This Caenorhabditis elegans protein is Partitioning defective protein 6.